We begin with the raw amino-acid sequence, 66 residues long: Ribosome biogenesis protein Nop10 (66 aa).

This sequence belongs to the NOP10 family.

In terms of biological role, involved in ribosome biogenesis; more specifically in 18S rRNA pseudouridylation and in cleavage of pre-rRNA. In Staphylothermus marinus (strain ATCC 43588 / DSM 3639 / JCM 9404 / F1), this protein is Ribosome biogenesis protein Nop10.